Consider the following 83-residue polypeptide: Small ribosomal subunit protein uS17 (83 aa).

It belongs to the universal ribosomal protein uS17 family. Part of the 30S ribosomal subunit.

Functionally, one of the primary rRNA binding proteins, it binds specifically to the 5'-end of 16S ribosomal RNA. This Magnetococcus marinus (strain ATCC BAA-1437 / JCM 17883 / MC-1) protein is Small ribosomal subunit protein uS17.